Consider the following 146-residue polypeptide: Ribosome maturation factor RimP (146 aa).

Belongs to the RimP family.

It localises to the cytoplasm. Its function is as follows. Required for maturation of 30S ribosomal subunits. This chain is Ribosome maturation factor RimP, found in Helicobacter pylori (strain ATCC 700392 / 26695) (Campylobacter pylori).